Reading from the N-terminus, the 144-residue chain is L-fucose mutarotase (144 aa).

H22 acts as the Proton donor in catalysis. Substrate contacts are provided by residues D30, R109, and 131-133 (YGN).

It belongs to the RbsD / FucU family. FucU mutarotase subfamily. In terms of assembly, homodecamer.

It localises to the cytoplasm. It catalyses the reaction alpha-L-fucose = beta-L-fucose. It participates in carbohydrate metabolism; L-fucose metabolism. In terms of biological role, involved in the anomeric conversion of L-fucose. This is L-fucose mutarotase from Haemophilus influenzae (strain 86-028NP).